The chain runs to 240 residues: MNIQGLTIAYKQKVAIDDVTLQIATGKLTGIVGPNGAGKSTLLKGMMGLVPREKGQVTLDNKPLTYWRKKIAYVPQRSEVDLTFPITVFDMVLLGTYPALGLIKRPGKKEKQLAFDALEQVEMTAFSKRQIGELSGGQLQRVFIARALAQHAEIFFLDEPFAGIDMASEALIMKLLKKLRDNGKTIVVVHHDFHKVAAYFDDIILLNKKLVAHGPVEQTFTEEKIQFAYGDAPVAFAAGV.

One can recognise an ABC transporter domain in the interval 1-233 (MNIQGLTIAY…KIQFAYGDAP (233 aa)). 33-40 (GPNGAGKS) contributes to the ATP binding site.

It belongs to the ABC transporter superfamily.

It is found in the cell membrane. This protein is probably a component of a manganese permease, a binding protein-dependent, ATP-driven transport system. Probably responsible for energy coupling to the transport system. In Listeria innocua serovar 6a (strain ATCC BAA-680 / CLIP 11262), this protein is Manganese transport system ATP-binding protein MntB (mntB).